The sequence spans 100 residues: Small ribosomal subunit protein uS14c (100 aa).

Belongs to the universal ribosomal protein uS14 family. In terms of assembly, part of the 30S ribosomal subunit.

The protein localises to the plastid. It is found in the chloroplast. Functionally, binds 16S rRNA, required for the assembly of 30S particles. This Tetradesmus obliquus (Green alga) protein is Small ribosomal subunit protein uS14c.